The sequence spans 147 residues: Putative pre-16S rRNA nuclease (147 aa).

This sequence belongs to the YqgF nuclease family.

The protein localises to the cytoplasm. In terms of biological role, could be a nuclease involved in processing of the 5'-end of pre-16S rRNA. The chain is Putative pre-16S rRNA nuclease from Ligilactobacillus salivarius (strain UCC118) (Lactobacillus salivarius).